The chain runs to 67 residues: uncharacterized protein (67 aa).

This sequence belongs to the baculoviridae 8 kDa protein family.

This is an uncharacterized protein from Autographa californica nuclear polyhedrosis virus (AcMNPV).